A 553-amino-acid polypeptide reads, in one-letter code: CTP synthase (553 aa).

Residues 1 to 270 (MTKFVFVTGG…DRIICEELRI (270 aa)) form an amidoligase domain region. Position 13 (Ser-13) interacts with CTP. Ser-13 contacts UTP. Residues 14-19 (SLGKGI) and Asp-71 each bind ATP. Positions 71 and 144 each coordinate Mg(2+). CTP contacts are provided by residues 151 to 153 (DIE), 191 to 196 (KTKPTQ), and Lys-227. UTP is bound by residues 191–196 (KTKPTQ) and Lys-227. The Glutamine amidotransferase type-1 domain maps to 295-547 (TIGMVGKYVD…VEAALAHQQN (253 aa)). Gly-356 contacts L-glutamine. Residue Cys-383 is the Nucleophile; for glutamine hydrolysis of the active site. L-glutamine-binding positions include 384-387 (LGMQ), Glu-407, and Arg-473. Active-site residues include His-520 and Glu-522.

Belongs to the CTP synthase family. In terms of assembly, homotetramer.

It carries out the reaction UTP + L-glutamine + ATP + H2O = CTP + L-glutamate + ADP + phosphate + 2 H(+). The enzyme catalyses L-glutamine + H2O = L-glutamate + NH4(+). It catalyses the reaction UTP + NH4(+) + ATP = CTP + ADP + phosphate + 2 H(+). It functions in the pathway pyrimidine metabolism; CTP biosynthesis via de novo pathway; CTP from UDP: step 2/2. Allosterically activated by GTP, when glutamine is the substrate; GTP has no effect on the reaction when ammonia is the substrate. The allosteric effector GTP functions by stabilizing the protein conformation that binds the tetrahedral intermediate(s) formed during glutamine hydrolysis. Inhibited by the product CTP, via allosteric rather than competitive inhibition. In terms of biological role, catalyzes the ATP-dependent amination of UTP to CTP with either L-glutamine or ammonia as the source of nitrogen. Regulates intracellular CTP levels through interactions with the four ribonucleotide triphosphates. The protein is CTP synthase of Ralstonia pickettii (strain 12J).